Consider the following 488-residue polypeptide: Glutamyl-tRNA(Gln) amidotransferase subunit A (488 aa).

Catalysis depends on charge relay system residues lysine 77 and serine 152. Serine 176 serves as the catalytic Acyl-ester intermediate.

The protein belongs to the amidase family. GatA subfamily. As to quaternary structure, heterotrimer of A, B and C subunits.

It catalyses the reaction L-glutamyl-tRNA(Gln) + L-glutamine + ATP + H2O = L-glutaminyl-tRNA(Gln) + L-glutamate + ADP + phosphate + H(+). In terms of biological role, allows the formation of correctly charged Gln-tRNA(Gln) through the transamidation of misacylated Glu-tRNA(Gln) in organisms which lack glutaminyl-tRNA synthetase. The reaction takes place in the presence of glutamine and ATP through an activated gamma-phospho-Glu-tRNA(Gln). This is Glutamyl-tRNA(Gln) amidotransferase subunit A from Streptococcus pneumoniae (strain 70585).